Reading from the N-terminus, the 506-residue chain is Maturase K (506 aa).

It belongs to the intron maturase 2 family. MatK subfamily.

It is found in the plastid. It localises to the chloroplast. Its function is as follows. Usually encoded in the trnK tRNA gene intron. Probably assists in splicing its own and other chloroplast group II introns. In Trifolium wormskioldii (Cows clover), this protein is Maturase K.